The chain runs to 552 residues: Chaperonin GroEL (552 aa).

ATP is bound by residues 30–33 (TLGP), Lys-51, 87–91 (DGTTT), Gly-415, 480–482 (NAA), and Asp-496.

It belongs to the chaperonin (HSP60) family. As to quaternary structure, forms a cylinder of 14 subunits composed of two heptameric rings stacked back-to-back. Interacts with the co-chaperonin GroES.

The protein localises to the cytoplasm. It carries out the reaction ATP + H2O + a folded polypeptide = ADP + phosphate + an unfolded polypeptide.. Its function is as follows. Together with its co-chaperonin GroES, plays an essential role in assisting protein folding. The GroEL-GroES system forms a nano-cage that allows encapsulation of the non-native substrate proteins and provides a physical environment optimized to promote and accelerate protein folding. This chain is Chaperonin GroEL, found in Coxiella burnetii (strain RSA 331 / Henzerling II).